A 281-amino-acid polypeptide reads, in one-letter code: Ethylene-inducing xylanase 1 (281 aa).

The signal sequence occupies residues 1-19 (MVSYKAFLITLAAVTRVLT). A glycan (N-linked (GlcNAc...) asparagine) is linked at asparagine 23. Residues 32–220 (SGTPSSTGTS…SSGSSDITVG (189 aa)) form the GH11 domain. Glutamate 116 serves as the catalytic Nucleophile. Catalysis depends on glutamate 207, which acts as the Proton donor. A CBM1 domain is found at 246–281 (TCGALYSQCGGTGFTGSQCCASGTCKYANSYYSQCL).

Belongs to the glycosyl hydrolase 11 (cellulase G) family.

The enzyme catalyses Endohydrolysis of (1-&gt;4)-beta-D-xylosidic linkages in xylans.. Its pathway is glycan degradation; xylan degradation. Endo-1,4-beta-xylanase involved in the hydrolysis of xylan, a major structural heterogeneous polysaccharide found in plant biomass representing the second most abundant polysaccharide in the biosphere, after cellulose. May act as an elicitor of plant defense responses in certain plants but does not exhibit any cell death when transiently expressed in N.benthamiana. The protein is Ethylene-inducing xylanase 1 of Botryotinia fuckeliana (strain B05.10) (Noble rot fungus).